A 459-amino-acid chain; its full sequence is Putrescine aminotransferase (459 aa).

Pyridoxal 5'-phosphate is bound by residues Gly-150 to Thr-151 and Gln-274. The residue at position 300 (Lys-300) is an N6-(pyridoxal phosphate)lysine. Thr-332 lines the pyridoxal 5'-phosphate pocket.

It belongs to the class-III pyridoxal-phosphate-dependent aminotransferase family. Putrescine aminotransferase subfamily. It depends on pyridoxal 5'-phosphate as a cofactor.

The catalysed reaction is an alkane-alpha,omega-diamine + 2-oxoglutarate = an omega-aminoaldehyde + L-glutamate. It catalyses the reaction putrescine + 2-oxoglutarate = 1-pyrroline + L-glutamate + H2O. It carries out the reaction cadaverine + 2-oxoglutarate = 5-aminopentanal + L-glutamate. Its pathway is amine and polyamine degradation; putrescine degradation; 4-aminobutanal from putrescine (transaminase route): step 1/1. Catalyzes the aminotransferase reaction from putrescine to 2-oxoglutarate, leading to glutamate and 4-aminobutanal, which spontaneously cyclizes to form 1-pyrroline. This is the first step in one of two pathways for putrescine degradation, where putrescine is converted into 4-aminobutanoate (gamma-aminobutyrate or GABA) via 4-aminobutanal. Also functions as a cadaverine transaminase in a a L-lysine degradation pathway to succinate that proceeds via cadaverine, glutarate and L-2-hydroxyglutarate. This chain is Putrescine aminotransferase, found in Escherichia coli (strain SMS-3-5 / SECEC).